The chain runs to 588 residues: ATP-dependent lipid A-core flippase (588 aa).

Transmembrane regions (helical) follow at residues 23-43 (FWPVLLLGVLANILYSGIDAG), 56-76 (FITIDLDFVKQIPLIVLIGIT), 141-161 (DALTDFIQNICLVIGLLTVMM), 162-182 (VICWQLSLMFLLTIPFVGIIV), 257-277 (LVIAIGIAMIIMAAIHLSTVI), and 278-298 (TISAGSFLAIIAAMLQLIKPM). Residues 28 to 310 (LLGVLANILY…LTTLNATIQR (283 aa)) enclose the ABC transmembrane type-1 domain. The region spanning 342 to 576 (IEFKHVYHAY…DGHYAQLYKV (235 aa)) is the ABC transporter domain. 375–382 (GHSGSGKT) is an ATP binding site.

This sequence belongs to the ABC transporter superfamily. Lipid exporter (TC 3.A.1.106) family. In terms of assembly, homodimer.

It localises to the cell inner membrane. It carries out the reaction ATP + H2O + lipid A-core oligosaccharideSide 1 = ADP + phosphate + lipid A-core oligosaccharideSide 2.. Its function is as follows. Involved in lipopolysaccharide (LPS) biosynthesis. Translocates lipid A-core from the inner to the outer leaflet of the inner membrane. Transmembrane domains (TMD) form a pore in the inner membrane and the ATP-binding domain (NBD) is responsible for energy generation. This Legionella pneumophila (strain Lens) protein is ATP-dependent lipid A-core flippase.